A 619-amino-acid polypeptide reads, in one-letter code: Probable galacturonosyltransferase 7 (619 aa).

The Cytoplasmic portion of the chain corresponds to 1 to 19 (MKGGGGGGGGGGGGKRRWK). Residues 20–40 (VLVIGVLVLVILSMLVPLAFL) traverse the membrane as a helical; Signal-anchor for type II membrane protein segment. The Lumenal segment spans residues 41–619 (LGLHNGFHSP…RFLSDCNVNP (579 aa)). Asn-68, Asn-106, Asn-132, Asn-343, and Asn-421 each carry an N-linked (GlcNAc...) asparagine glycan. Residues 95 to 139 (KSDINVGSRDVNATSGTDSKKRGLPVSPTVVANPSPANKTKSEAS) form a disordered region. Residues 124–139 (VVANPSPANKTKSEAS) are compositionally biased toward polar residues.

The protein belongs to the glycosyltransferase 8 family. Expressed in roots, inflorescences, flowers, siliques, leaves and stems.

The protein resides in the golgi apparatus membrane. Its pathway is glycan metabolism; pectin biosynthesis. May be involved in pectin biosynthesis. The sequence is that of Probable galacturonosyltransferase 7 (GAUT7) from Arabidopsis thaliana (Mouse-ear cress).